Reading from the N-terminus, the 260-residue chain is Thiazole synthase (260 aa).

The active-site Schiff-base intermediate with DXP is Lys100. 1-deoxy-D-xylulose 5-phosphate is bound by residues Gly162, 188–189, and 210–211; these read AG and NT.

It belongs to the ThiG family. Homotetramer. Forms heterodimers with either ThiH or ThiS.

The protein localises to the cytoplasm. It carries out the reaction [ThiS sulfur-carrier protein]-C-terminal-Gly-aminoethanethioate + 2-iminoacetate + 1-deoxy-D-xylulose 5-phosphate = [ThiS sulfur-carrier protein]-C-terminal Gly-Gly + 2-[(2R,5Z)-2-carboxy-4-methylthiazol-5(2H)-ylidene]ethyl phosphate + 2 H2O + H(+). It participates in cofactor biosynthesis; thiamine diphosphate biosynthesis. Its function is as follows. Catalyzes the rearrangement of 1-deoxy-D-xylulose 5-phosphate (DXP) to produce the thiazole phosphate moiety of thiamine. Sulfur is provided by the thiocarboxylate moiety of the carrier protein ThiS. In vitro, sulfur can be provided by H(2)S. In Wolinella succinogenes (strain ATCC 29543 / DSM 1740 / CCUG 13145 / JCM 31913 / LMG 7466 / NCTC 11488 / FDC 602W) (Vibrio succinogenes), this protein is Thiazole synthase.